The primary structure comprises 146 residues: Large ribosomal subunit protein uL11 (146 aa).

It belongs to the universal ribosomal protein uL11 family. In terms of assembly, part of the ribosomal stalk of the 50S ribosomal subunit. Interacts with L10 and the large rRNA to form the base of the stalk. L10 forms an elongated spine to which L12 dimers bind in a sequential fashion forming a multimeric L10(L12)X complex. Post-translationally, one or more lysine residues are methylated.

Its function is as follows. Forms part of the ribosomal stalk which helps the ribosome interact with GTP-bound translation factors. The sequence is that of Large ribosomal subunit protein uL11 from Buchnera aphidicola subsp. Baizongia pistaciae (strain Bp).